Consider the following 337-residue polypeptide: Transcription initiation factor IIB (337 aa).

The TFIIB-type zinc-finger motif lies at 37 to 68; that stretch reads EKAVCPECGSRNLVHDYERAELVCGDCGLVID. Zn(2+) is bound by residues Cys-41, Cys-44, Cys-60, and Cys-63. Repeat copies occupy residues 154 to 237 and 248 to 329.

Belongs to the TFIIB family.

In terms of biological role, stabilizes TBP binding to an archaeal box-A promoter. Also responsible for recruiting RNA polymerase II to the pre-initiation complex (DNA-TBP-TFIIB). The chain is Transcription initiation factor IIB from Methanosarcina mazei (Methanosarcina frisia).